The sequence spans 87 residues: Lipid-anchored plasma membrane protein uvi15 (87 aa).

The segment at 1–64 is disordered; it reads MSAQQFYGDK…MYVQQPQASD (64 aa). The segment covering 18 to 41 has biased composition (low complexity); it reads QQAYGGPNYYPPQQNYPQQGYAPP.

It belongs to the CYSTM1 family. Post-translationally, palmitoylated.

The protein localises to the cell membrane. Its subcellular location is the cell tip. Its function is as follows. Required for the maintenance of viability of cells in stationary phase and in starvation conditions. The protein is Lipid-anchored plasma membrane protein uvi15 (uvi15) of Schizosaccharomyces pombe (strain 972 / ATCC 24843) (Fission yeast).